The primary structure comprises 445 residues: UPF0210 protein SSU05_0296 (445 aa).

It belongs to the UPF0210 family. In terms of assembly, homodimer.

The chain is UPF0210 protein SSU05_0296 from Streptococcus suis (strain 05ZYH33).